A 136-amino-acid polypeptide reads, in one-letter code: ATP synthase epsilon chain (136 aa).

This sequence belongs to the ATPase epsilon chain family. As to quaternary structure, F-type ATPases have 2 components, CF(1) - the catalytic core - and CF(0) - the membrane proton channel. CF(1) has five subunits: alpha(3), beta(3), gamma(1), delta(1), epsilon(1). CF(0) has three main subunits: a, b and c.

The protein localises to the cell membrane. Its function is as follows. Produces ATP from ADP in the presence of a proton gradient across the membrane. The sequence is that of ATP synthase epsilon chain from Ureaplasma parvum serovar 3 (strain ATCC 27815 / 27 / NCTC 11736).